A 611-amino-acid polypeptide reads, in one-letter code: MKNPLRSSFSTEGRRMAGARALWRANGMKEEQFGKPIIAIVNSFTQFVPGHTHLHEIGQLVKAEIEKQGCFAAEFNTIAIDDGIAMGHDGMLYSLPSRDIIADSVEYMVNAHKADAMVCISNCDKITPGMLMASMRLNIPTVFVSGGPMEAGELDGRHLDLIDAMIESADTSVSDERIEQVERHACPGCGCCSGMFTANSMNCLNEAIGLALPGNGTIVATHKNRIQLFRDAAKQIVENAYKYYRDGDDSVLPRNIATRQAFLNAMSLDIAMGGSTNTVLHLLAVAQEAGADFHMEDIDMLSRKTPCLCKVAPNTHTYHVQDVNRAGGILGIMNELMKAGLVDGSTRRADGLTLAEAVDKYAVTSPNVTEEAIRKYKSAPAHRFSIQMGSQESYYKELDTDRAEGCIRDVEHAYSKDGGLAVLRGNIALDGCVVKTAGVDESIWKFSGPAKVFDSQDAACEGILGGKVVSGDVVVITYEGPKGGPGMQEMLYPTSYIKSRHLGKECALITDGRFSGGTSGLSIGHISPEAASGGAIGLVRDGDIIEINIPERSINVRLSDEELAERRKAEEARGKKAFTPPTRQREVSKALRAYGKMVSSADKGGVRIVED.

Asp-82 contributes to the Mg(2+) binding site. Cys-123 is a binding site for [2Fe-2S] cluster. Residues Asp-124 and Lys-125 each coordinate Mg(2+). Position 125 is an N6-carboxylysine (Lys-125). Position 192 (Cys-192) interacts with [2Fe-2S] cluster. Glu-489 contributes to the Mg(2+) binding site. Catalysis depends on Ser-515, which acts as the Proton acceptor. Residues Glu-565–Gly-574 are compositionally biased toward basic and acidic residues. A disordered region spans residues Glu-565 to Glu-586.

The protein belongs to the IlvD/Edd family. In terms of assembly, homodimer. The cofactor is [2Fe-2S] cluster. Requires Mg(2+) as cofactor.

The enzyme catalyses (2R)-2,3-dihydroxy-3-methylbutanoate = 3-methyl-2-oxobutanoate + H2O. It catalyses the reaction (2R,3R)-2,3-dihydroxy-3-methylpentanoate = (S)-3-methyl-2-oxopentanoate + H2O. It functions in the pathway amino-acid biosynthesis; L-isoleucine biosynthesis; L-isoleucine from 2-oxobutanoate: step 3/4. The protein operates within amino-acid biosynthesis; L-valine biosynthesis; L-valine from pyruvate: step 3/4. In terms of biological role, functions in the biosynthesis of branched-chain amino acids. Catalyzes the dehydration of (2R,3R)-2,3-dihydroxy-3-methylpentanoate (2,3-dihydroxy-3-methylvalerate) into 2-oxo-3-methylpentanoate (2-oxo-3-methylvalerate) and of (2R)-2,3-dihydroxy-3-methylbutanoate (2,3-dihydroxyisovalerate) into 2-oxo-3-methylbutanoate (2-oxoisovalerate), the penultimate precursor to L-isoleucine and L-valine, respectively. The chain is Dihydroxy-acid dehydratase from Parabacteroides distasonis (strain ATCC 8503 / DSM 20701 / CIP 104284 / JCM 5825 / NCTC 11152).